A 102-amino-acid polypeptide reads, in one-letter code: uncharacterized protein (102 aa).

Positions 1-21 (MAESVNENNNNAGDSNGSGRT) are disordered. The N-linked (GlcNAc...) asparagine glycan is linked to asparagine 16. The helical transmembrane segment at 24–44 (NTIVTIVVVVIVVTLIIILAT) threads the bilayer. The disordered stretch occupies residues 49–102 (IGGSGKKVGAEEPATKLSSKSDDRNGGPNKKSPAKGSSKDDNNTEESVQSNLYG). The span at 56–73 (VGAEEPATKLSSKSDDRN) shows a compositional bias: basic and acidic residues. A glycan (N-linked (GlcNAc...) asparagine) is linked at asparagine 90. Over residues 93-102 (EESVQSNLYG) the composition is skewed to polar residues.

Its subcellular location is the membrane. This is an uncharacterized protein from Encephalitozoon cuniculi (strain GB-M1) (Microsporidian parasite).